The primary structure comprises 71 residues: UPF0352 protein Ssed_1809 (71 aa).

It belongs to the UPF0352 family.

The protein is UPF0352 protein Ssed_1809 of Shewanella sediminis (strain HAW-EB3).